A 224-amino-acid chain; its full sequence is Claudin-17 (224 aa).

Topologically, residues 1 to 7 (MAFYPLQ) are cytoplasmic. The chain crosses the membrane as a helical span at residues 8 to 28 (IAGLVLGFLGMVGTLATTLLP). Residues 29–81 (QWRVSAFVGSNIIVFERLWEGLWMNCIRQARVRLQCKFYSSLLALPPALETAR) lie on the Extracellular side of the membrane. A helical membrane pass occupies residues 82-102 (ALMCVAVALSLIALLIGICGM). Residues 103 to 124 (KQVQCTGSNERAKAYLLGTSGV) lie on the Cytoplasmic side of the membrane. Residues 125–145 (LFILTGIFVLIPVSWTANIII) traverse the membrane as a helical segment. At 146–164 (RDFYNPAIHIGQKRELGAA) the chain is on the extracellular side. The helical transmembrane segment at 165 to 185 (LFLGWASAAVLFIGGGLLCGF) threads the bilayer. Residues 186–224 (CCCNRKKQGYRYPVPGYRVPHTDKRRNTTMLSKTSTSYV) lie on the Cytoplasmic side of the membrane.

The protein belongs to the claudin family. In terms of assembly, cannot form tight junction strands on its own. Interacts with OCLN. As to expression, in the kidney, expressed in the proximal tubule and in the Henle's loop. In the distal convoluted tubule, not expressed in all tubules. Not detected in the collecting duct (at protein level).

The protein resides in the cell junction. The protein localises to the tight junction. Its subcellular location is the basolateral cell membrane. It catalyses the reaction chloride(in) = chloride(out). The catalysed reaction is hydrogencarbonate(in) = hydrogencarbonate(out). It carries out the reaction bromide(in) = bromide(out). The enzyme catalyses iodide(out) = iodide(in). It catalyses the reaction fluoride(in) = fluoride(out). The catalysed reaction is nitrate(in) = nitrate(out). It carries out the reaction thiocyanate(in) = thiocyanate(out). Functionally, channel-forming tight junction protein with selectivity for anions, including chloride and hydrogencarbonate, and for solutes smaller than 9 Angstrom in diameter. In the kidney proximal tubule, may be involved in paracellular reabsorption of filtered anions. Does not affect water permeability. The protein is Claudin-17 (CLDN17) of Homo sapiens (Human).